The following is a 367-amino-acid chain: NADH-quinone oxidoreductase subunit D (367 aa).

The protein belongs to the complex I 49 kDa subunit family. NDH-1 is composed of 14 different subunits. Subunits NuoB, C, D, E, F, and G constitute the peripheral sector of the complex.

The protein resides in the cell membrane. The catalysed reaction is a quinone + NADH + 5 H(+)(in) = a quinol + NAD(+) + 4 H(+)(out). In terms of biological role, NDH-1 shuttles electrons from NADH, via FMN and iron-sulfur (Fe-S) centers, to quinones in the respiratory chain. The immediate electron acceptor for the enzyme in this species is believed to be ubiquinone. Couples the redox reaction to proton translocation (for every two electrons transferred, four hydrogen ions are translocated across the cytoplasmic membrane), and thus conserves the redox energy in a proton gradient. This is NADH-quinone oxidoreductase subunit D from Dehalococcoides mccartyi (strain ATCC BAA-2266 / KCTC 15142 / 195) (Dehalococcoides ethenogenes (strain 195)).